Consider the following 172-residue polypeptide: Ribosome maturation factor RimM (172 aa).

A PRC barrel domain is found at 96–168; that stretch reads DGEFYYHEII…RVDVEILEGL (73 aa).

Belongs to the RimM family. As to quaternary structure, binds ribosomal protein uS19.

Its subcellular location is the cytoplasm. Functionally, an accessory protein needed during the final step in the assembly of 30S ribosomal subunit, possibly for assembly of the head region. Essential for efficient processing of 16S rRNA. May be needed both before and after RbfA during the maturation of 16S rRNA. It has affinity for free ribosomal 30S subunits but not for 70S ribosomes. The protein is Ribosome maturation factor RimM of Streptococcus pneumoniae serotype 4 (strain ATCC BAA-334 / TIGR4).